Consider the following 128-residue polypeptide: Small ribosomal subunit protein bS6 (128 aa).

The protein belongs to the bacterial ribosomal protein bS6 family.

In terms of biological role, binds together with bS18 to 16S ribosomal RNA. The chain is Small ribosomal subunit protein bS6 (rpsF) from Thermotoga maritima (strain ATCC 43589 / DSM 3109 / JCM 10099 / NBRC 100826 / MSB8).